Consider the following 131-residue polypeptide: Protein Turandot M (131 aa).

Positions 1 to 23 (MNPAIYLSCLVVFSLLLLGKVNA) are cleaved as a signal peptide.

This sequence belongs to the Turandot family.

The protein localises to the secreted. In terms of biological role, a humoral factor that may play a role in stress tolerance. Requires Mekk1 expression in the fat body to regulate response to septic injury and consequent immune response. This chain is Protein Turandot M, found in Drosophila erecta (Fruit fly).